A 1933-amino-acid chain; its full sequence is WD repeat-containing protein 81 (1933 aa).

Residues 1-643 (MAQGSRRRKV…TPCESGWTRE (643 aa)) are necessary and sufficient for the interaction with SQSTM1. 6 disordered regions span residues 305 to 334 (PSEDENQEVSEEKDRTGVKSEKDGEGRPGC), 663 to 714 (SIPG…GKIV), 1038 to 1057 (CAFGEEIQMGGQPAASSGLG), 1090 to 1209 (QPQE…EGKE), 1517 to 1544 (SLRNPASMEPVTPSAGPEWNPQSGSCLQ), and 1565 to 1590 (DSQPQSSGPLGSISGVGSGGLSSRNE). Basic and acidic residues predominate over residues 314-330 (SEEKDRTGVKSEKDGEG). A BEACH domain is found at 333 to 610 (GCPTCQKELR…IPRLLVQPIQ (278 aa)). The span at 668–693 (AGDQPGSSSSQASPGLLPFSAPSGSR) shows a compositional bias: low complexity. Composition is skewed to polar residues over residues 1100 to 1112 (GQLSDKSSTSEAS) and 1131 to 1140 (VKSGDSSQDL). Positions 1145-1166 (GSEEEEEEEEGCVVLEEEEQDE) are enriched in acidic residues. WD repeat units follow at residues 1638–1677 (GHTGAVKCVAALSSEDFFLSGSKDRTVRLWPLYNYGDGTS), 1684–1724 (IYAQ…TLRT), 1776–1815 (LNPGLVRSLAVSPSGRSVVAGFSSGFMVLLDTRTGLVLRG), 1818–1856 (AHEGDILQIKAVEGSVIVSSSSDHSLTVWKELEQKPTHH), and 1903–1933 (NFRGTLTSLALLPTKRHLLLGSDNGIIRLLA).

Belongs to the WD repeat WDR81 family. In terms of assembly, interacts with WDR91; involved in early to late endosome cargo transport. Interacts with BECN1; negatively regulates the PI3 kinase/PI3K activity associated with endosomal membranes. Interacts with SQSTM1; the interaction is direct and regulates the interaction of SQSTM1 with ubiquitinated proteins. Interacts with MAP1LC3C; recruits MAP1LC3C to ubiquitinated protein aggregates in the aggrephagy process.

It is found in the early endosome membrane. The protein resides in the late endosome membrane. It localises to the lysosome membrane. Its subcellular location is the cytoplasmic vesicle. The protein localises to the autophagosome membrane. It is found in the mitochondrion. The protein resides in the cytoplasm. It localises to the cytosol. Functions as a negative regulator of the PI3 kinase/PI3K activity associated with endosomal membranes via BECN1, a core subunit of the PI3K complex. By modifying the phosphatidylinositol 3-phosphate/PtdInsP3 content of endosomal membranes may regulate endosome fusion, recycling, sorting and early to late endosome transport. It is for instance, required for the delivery of cargos like BST2/tetherin from early to late endosome and thereby participates indirectly to their degradation by the lysosome. May also play a role in aggrephagy, the macroautophagic degradation of ubiquitinated protein aggregates. In this process, may regulate the interaction of SQSTM1 with ubiquitinated proteins and also recruit MAP1LC3C. May also be involved in maintenance of normal mitochondrial structure and organization. The sequence is that of WD repeat-containing protein 81 from Rattus norvegicus (Rat).